The sequence spans 321 residues: Mitochondrial thiamine pyrophosphate carrier 1 (321 aa).

3 Solcar repeats span residues Gly12–Met110, Pro121–Val207, and Pro216–Ile311. Helical transmembrane passes span Val17 to Ile38, Leu91 to Ile107, Phe127 to Leu147, Gly182 to Ala199, Leu213 to Val231, and Gly286 to Trp303.

The protein belongs to the mitochondrial carrier (TC 2.A.29) family.

It localises to the mitochondrion inner membrane. Its function is as follows. Mitochondrial transporter that mediates uptake of thiamine pyrophosphate (ThPP) into mitochondria. The chain is Mitochondrial thiamine pyrophosphate carrier 1 (TPC1) from Phaeosphaeria nodorum (strain SN15 / ATCC MYA-4574 / FGSC 10173) (Glume blotch fungus).